The primary structure comprises 587 residues: Chaperonin GroEL 1 (587 aa).

ATP-binding positions include 29–32, 86–90, Gly-413, and Asp-492; these read TIGP and DGTTT.

It belongs to the chaperonin (HSP60) family. Forms a cylinder of 14 subunits composed of two heptameric rings stacked back-to-back. Interacts with the co-chaperonin GroES.

It localises to the cytoplasm. The enzyme catalyses ATP + H2O + a folded polypeptide = ADP + phosphate + an unfolded polypeptide.. Functionally, together with its co-chaperonin GroES, plays an essential role in assisting protein folding. The GroEL-GroES system forms a nano-cage that allows encapsulation of the non-native substrate proteins and provides a physical environment optimized to promote and accelerate protein folding. This Prochlorococcus marinus (strain MIT 9515) protein is Chaperonin GroEL 1.